We begin with the raw amino-acid sequence, 368 residues long: Anti-sigma-X factor RsiX (368 aa).

The segment covering 73–87 has biased composition (polar residues); the sequence is QPQQKEASQENAVTK. The tract at residues 73 to 101 is disordered; that stretch reads QPQQKEASQENAVTKTETEDSPKAASSLD.

Its subcellular location is the cell membrane. In terms of biological role, the anti-sigma factor for extracytoplasmic function (ECF) sigma factor SigX, inhibits SigX activity and stabilizes it. This chain is Anti-sigma-X factor RsiX (rsiX), found in Bacillus subtilis (strain 168).